Reading from the N-terminus, the 138-residue chain is Probable non-specific lipid-transfer protein 1 (138 aa).

Residues 1-36 (MRTVSARSSVALVVIVAAVLVWTSSASVAPAPAPGS) form the signal peptide. 4 disulfide bridges follow: C40/C88, C50/C65, C66/C111, and C86/C127.

Belongs to the plant LTP family.

In terms of biological role, plant non-specific lipid-transfer proteins transfer phospholipids as well as galactolipids across membranes. May play a role in wax or cutin deposition in the cell walls of expanding epidermal cells and certain secretory tissues. This chain is Probable non-specific lipid-transfer protein 1, found in Parietaria judaica (Pellitory-of-the-wall).